The sequence spans 1270 residues: Myosin-1 (1270 aa).

The tract at residues Met-1–Ala-40 is disordered. In terms of domain architecture, Myosin motor spans Ile-50–Asp-729. Position 143–150 (Gly-143–Thr-150) interacts with ATP. Ser-371 carries the post-translational modification Phosphoserine. Residues Ser-418 to Ala-500 form an actin-binding region. 2 IQ domains span residues His-733–Cys-753 and Ala-754–Gln-779. The region spanning Arg-787–Pro-980 is the TH1 domain. Disordered regions lie at residues Gly-960–Asp-1102 and Pro-1144–Trp-1270. Positions Asn-963–Thr-974 are enriched in polar residues. The span at Ala-1023–Gln-1058 shows a compositional bias: pro residues. A compositionally biased stretch (low complexity) spans Pro-1059–Arg-1078. The segment covering Ala-1079–Pro-1088 has biased composition (pro residues). An SH3 domain is found at Gln-1092–Ala-1153. Residues Lys-1157–Ala-1167 show a composition bias toward pro residues. 2 stretches are compositionally biased toward low complexity: residues Pro-1168 to Lys-1186 and Asn-1238 to Ala-1252.

It belongs to the TRAFAC class myosin-kinesin ATPase superfamily. Myosin family. Phosphorylation of the TEDS site (Ser-371) is required for the polarization of the actin cytoskeleton. Phosphorylation probably activates the myosin-I ATPase activity.

Its subcellular location is the cytoplasm. It localises to the cytoskeleton. The protein resides in the actin patch. Type-I myosin implicated in the organization of the actin cytoskeleton. Required for proper actin cytoskeleton polarization. At the cell cortex, assembles in patch-like structures together with proteins from the actin-polymerizing machinery and promotes actin assembly. Functions as actin nucleation-promoting factor (NPF) for the Arp2/3 complex. Plays an important role in polarized growth, spore germination, hyphal morphogenesis, and septal wall formation. In Aspergillus niger (strain ATCC MYA-4892 / CBS 513.88 / FGSC A1513), this protein is Myosin-1 (myoA).